Here is a 494-residue protein sequence, read N- to C-terminus: Cytochrome P450 monooxygenase acrF (494 aa).

Cysteine 420 is a binding site for heme.

The protein belongs to the cytochrome P450 family. Heme serves as cofactor.

It functions in the pathway secondary metabolite biosynthesis. Functionally, cytochrome P450 monooxygenase; part of the cluster that mediates the biosynthesis of acurin A, a highly reduced polyketide coupled to a serine via a peptide bond. The activities of the highly reducing polyketide synthase acrA and the nonribosomal peptide synthetase acrB are collectively responsible for the synthesis of the acurin A core structure with a heptaketide backbone produced by acrA covalently fused to a L-serine by acrB. After the formation of the PK-NRP hybrid product, it is detached from acrB by reductive release to set up the formation of the lactam ring by aldol condensation. The hydrolyase acrC then catalyzes water loss to generate a double bond in the ring. This double bond is probably reduced, which is followed by three oxidations at C-22 to generate the carboxylic acid moiety, involving probably the FAD-binding monooxygenase acrE and the cytochrome P450 monooxygenases acrD and acrF. Finally, a last methylation step performed by the O-methyltransferase acrG leads to the production of acurin A. This Aspergillus aculeatus (strain ATCC 16872 / CBS 172.66 / WB 5094) protein is Cytochrome P450 monooxygenase acrF.